Reading from the N-terminus, the 95-residue chain is Protein Vpr (95 aa).

The interval 1 to 42 (MERAPEDAGPQREPYNEWALELLEELKNEAVRHFPRIWLHGL) is homooligomerization. Phosphoserine; by host is present on residues Ser-79, Ser-93, and Ser-95.

This sequence belongs to the HIV-1 VPR protein family. In terms of assembly, homooligomer, may form homodimer. Interacts with p6-gag region of the Pr55 Gag precursor protein through a (Leu-X-X)4 motif near the C-terminus of the P6gag protein. Interacts with host UNG. May interact with host RAD23A/HHR23A. Interacts with host VPRBP/DCAF1, leading to hijack the CUL4A-RBX1-DDB1-DCAF1/VPRBP complex, mediating ubiquitination of host proteins such as TERT and ZGPAT and arrest of the cell cycle in G2 phase. Phosphorylated on several residues by host. These phosphorylations regulate VPR activity for the nuclear import of the HIV-1 pre-integration complex.

The protein resides in the virion. It localises to the host nucleus. The protein localises to the host extracellular space. During virus replication, may deplete host UNG protein, and incude G2-M cell cycle arrest. Acts by targeting specific host proteins for degradation by the 26S proteasome, through association with the cellular CUL4A-DDB1 E3 ligase complex by direct interaction with host VPRPB/DCAF-1. Cell cycle arrest reportedly occurs within hours of infection and is not blocked by antiviral agents, suggesting that it is initiated by the VPR carried into the virion. Additionally, VPR induces apoptosis in a cell cycle dependent manner suggesting that these two effects are mechanistically linked. Detected in the serum and cerebrospinal fluid of AIDS patient, VPR may also induce cell death to bystander cells. Functionally, during virus entry, plays a role in the transport of the viral pre-integration (PIC) complex to the host nucleus. This function is crucial for viral infection of non-dividing macrophages. May act directly at the nuclear pore complex, by binding nucleoporins phenylalanine-glycine (FG)-repeat regions. The polypeptide is Protein Vpr (Human immunodeficiency virus type 1 group N (isolate YBF30) (HIV-1)).